The sequence spans 450 residues: 3-phosphoshikimate 1-carboxyvinyltransferase (450 aa).

Lysine 28, serine 29, and arginine 33 together coordinate 3-phosphoshikimate. Residue lysine 28 coordinates phosphoenolpyruvate. Glycine 100 and arginine 128 together coordinate phosphoenolpyruvate. 3-phosphoshikimate contacts are provided by serine 173, glutamine 175, aspartate 326, and lysine 353. Position 175 (glutamine 175) interacts with phosphoenolpyruvate. Aspartate 326 functions as the Proton acceptor in the catalytic mechanism. Positions 357 and 402 each coordinate phosphoenolpyruvate.

The protein belongs to the EPSP synthase family. In terms of assembly, monomer.

The protein resides in the cytoplasm. It carries out the reaction 3-phosphoshikimate + phosphoenolpyruvate = 5-O-(1-carboxyvinyl)-3-phosphoshikimate + phosphate. Its pathway is metabolic intermediate biosynthesis; chorismate biosynthesis; chorismate from D-erythrose 4-phosphate and phosphoenolpyruvate: step 6/7. Its function is as follows. Catalyzes the transfer of the enolpyruvyl moiety of phosphoenolpyruvate (PEP) to the 5-hydroxyl of shikimate-3-phosphate (S3P) to produce enolpyruvyl shikimate-3-phosphate and inorganic phosphate. The chain is 3-phosphoshikimate 1-carboxyvinyltransferase from Brucella abortus (strain S19).